Here is a 147-residue protein sequence, read N- to C-terminus: MNRLEVTEKIISTKVTKGIKWEAVAKKVGLSKEWVTAACLGQMTLNAEQAKIVGKMFGLTVEEQKWLQVAPYKGSLPTLVPTDPLIYRWYEIVNVYGSTIKELIHEEFGDGIMSAIDFSMDIVRQPDPKGDRVNVVLSGKFLPYKQY.

Catalysis depends on residues Arg88, Glu91, and Ser114.

This sequence belongs to the cyanase family.

It catalyses the reaction cyanate + hydrogencarbonate + 3 H(+) = NH4(+) + 2 CO2. Functionally, catalyzes the reaction of cyanate with bicarbonate to produce ammonia and carbon dioxide. This chain is Cyanate hydratase, found in Albidiferax ferrireducens (strain ATCC BAA-621 / DSM 15236 / T118) (Rhodoferax ferrireducens).